The chain runs to 321 residues: Eukaryotic translation initiation factor 3 subunit I (321 aa).

WD repeat units lie at residues 8-47, 50-89, 140-179, 182-221, and 279-318; these read GHERNITQIKYNRMGDLLFSAAKDTRPTVWYSLNGERLGT, GHGGAVWCIDVNYDTTQFISGGADNCLRLWDCEKGVTLSK, VDNSKVTAGLWGPLDQFLVTGHENGELCQWDVKSGNKLIS, EHSKQINDIQMYKDSTMFVTASKDTTAKLFDTDSLRHLKT, and GHFGPINSLAFHPDGRSYSSGGEDGYVRIHSFDPSYDDIE.

The protein belongs to the eIF-3 subunit I family. Component of the eukaryotic translation initiation factor 3 (eIF-3) complex.

The protein localises to the cytoplasm. Component of the eukaryotic translation initiation factor 3 (eIF-3) complex, which is involved in protein synthesis of a specialized repertoire of mRNAs and, together with other initiation factors, stimulates binding of mRNA and methionyl-tRNAi to the 40S ribosome. The eIF-3 complex specifically targets and initiates translation of a subset of mRNAs involved in cell proliferation. The polypeptide is Eukaryotic translation initiation factor 3 subunit I (Nematostella vectensis (Starlet sea anemone)).